An 895-amino-acid chain; its full sequence is Putative endoplasmic reticulum metallopeptidase 1-A (895 aa).

Positions 1–30 (MLRRRGGPNELRDELNNSKNQPEDDQRTKR) are disordered. At 1 to 34 (MLRRRGGPNELRDELNNSKNQPEDDQRTKRGRES) the chain is on the cytoplasmic side. A compositionally biased stretch (basic and acidic residues) spans 10–30 (ELRDELNNSKNQPEDDQRTKR). Residues 35–55 (IGFRHWIYFVLTVAIVYAGVV) form a helical membrane-spanning segment. Residues 56–383 (ALHRKMPAVR…VVGLFTVYYS (328 aa)) lie on the Lumenal side of the membrane. His174 and Asp186 together coordinate Zn(2+). Glu220 acts as the Proton acceptor in catalysis. Positions 221, 247, and 323 each coordinate Zn(2+). A helical transmembrane segment spans residues 384–404 (VNVGKLLNYIACFATYFLVVL). Residues 405–423 (RIRNRLYSVGDLAIAFKHH) are Cytoplasmic-facing. Residues 424-444 (VVAFLAMVITMLLIIAFVVQM) form a helical membrane-spanning segment. Over 445-452 (DLVMCWYK) the chain is Lumenal. A helical transmembrane segment spans residues 453–473 (MPEIVGALYVLPMLIAGAIVH). Residues 474–492 (SHYADNNRIRNVEMVQYDT) are Cytoplasmic-facing. Residues 493–513 (ILLSFASILFLMTFYNLSSAF) traverse the membrane as a helical segment. The Lumenal segment spans residues 514–517 (YVLN). Residues 518-538 (NLILPVFKDIIIWALGLFGVI) traverse the membrane as a helical segment. At 539–544 (RRVTPR) the chain is on the cytoplasmic side. Residues 545-565 (VLFFTQLFCFLPTFVFAAYAI) traverse the membrane as a helical segment. Residues 566–586 (SQCVDFFVPVMGRLGNAINPE) are Lumenal-facing. Residues 587-607 (FIMGPLGLVIASGFILFVNNL) form a helical membrane-spanning segment. The Cytoplasmic portion of the chain corresponds to 608-613 (FYISRR). The helical transmembrane segment at 614-634 (MNYIIRLLFAIFALFILVLIT) threads the bilayer. At 635-895 (TKVGNPYEYS…GRSEIVVKIF (261 aa)) the chain is on the lumenal side. N-linked (GlcNAc...) asparagine glycans are attached at residues Asn659, Asn702, and Asn758.

The protein belongs to the peptidase M28 family. The cofactor is Zn(2+).

Its subcellular location is the endoplasmic reticulum membrane. The chain is Putative endoplasmic reticulum metallopeptidase 1-A from Caenorhabditis elegans.